The sequence spans 291 residues: MEMO1 family protein TK1477 (291 aa).

The protein belongs to the MEMO1 family.

The protein is MEMO1 family protein TK1477 of Thermococcus kodakarensis (strain ATCC BAA-918 / JCM 12380 / KOD1) (Pyrococcus kodakaraensis (strain KOD1)).